The following is a 367-amino-acid chain: Alginate lyase (367 aa).

The first 24 residues, 1-24, serve as a signal peptide directing secretion; sequence MTIFKRISSPALLALALFGGAAHA. Residues 63–64, 136–137, and Tyr-254 contribute to the substrate site; these read SK and HT.

The protein belongs to the polysaccharide lyase 5 family.

Its subcellular location is the periplasm. The enzyme catalyses Eliminative cleavage of alginate to give oligosaccharides with 4-deoxy-alpha-L-erythro-hex-4-enuronosyl groups at their non-reducing ends and beta-D-mannuronate at their reducing end.. In terms of biological role, catalyzes the depolymerization of alginate by cleaving the beta-1,4 glycosidic bond between two adjacent sugar residues via a beta-elimination mechanism. May serve to degrade mislocalized alginate that is trapped in the periplasmic space. This is Alginate lyase from Pseudomonas putida (strain ATCC 700007 / DSM 6899 / JCM 31910 / BCRC 17059 / LMG 24140 / F1).